A 585-amino-acid polypeptide reads, in one-letter code: uncharacterized protein (585 aa).

This is an uncharacterized protein from Escherichia coli (strain K12).